Here is a 330-residue protein sequence, read N- to C-terminus: Aspartate--ammonia ligase (330 aa).

Belongs to the class-II aminoacyl-tRNA synthetase family. AsnA subfamily. As to quaternary structure, homodimer.

It localises to the cytoplasm. It catalyses the reaction L-aspartate + NH4(+) + ATP = L-asparagine + AMP + diphosphate + H(+). It functions in the pathway amino-acid biosynthesis; L-asparagine biosynthesis; L-asparagine from L-aspartate (ammonia route): step 1/1. This is Aspartate--ammonia ligase from Salmonella typhimurium (strain LT2 / SGSC1412 / ATCC 700720).